Here is a 218-residue protein sequence, read N- to C-terminus: Protein N-lysine methyltransferase METTL21A (218 aa).

Residues tryptophan 47, 73 to 75, aspartate 94, tryptophan 125, and alanine 143 contribute to the S-adenosyl-L-methionine site; that span reads GAG.

This sequence belongs to the methyltransferase superfamily. METTL21 family. In terms of assembly, interacts with heat shock 70 family members; at least some of these proteins are methylation substrates.

It is found in the cytoplasm. The catalysed reaction is L-lysyl-[protein] + 3 S-adenosyl-L-methionine = N(6),N(6),N(6)-trimethyl-L-lysyl-[protein] + 3 S-adenosyl-L-homocysteine + 3 H(+). In terms of biological role, protein-lysine methyltransferase that selectively trimethylates residues in heat shock protein 70 (HSP70) family members. Contributes to the in vivo trimethylation of Lys residues in HSPA1 and HSPA8. In vitro methylates 'Lys-561' in HSPA1, 'Lys-564' in HSPA2, 'Lys-585' in HSPA5, 'Lys-563' in HSPA6 and 'Lys-561' in HSPA8. This chain is Protein N-lysine methyltransferase METTL21A (METTL21A), found in Bos taurus (Bovine).